Reading from the N-terminus, the 295-residue chain is 4-hydroxy-tetrahydrodipicolinate synthase 1 (295 aa).

Thr46 contributes to the pyruvate binding site. Tyr134 functions as the Proton donor/acceptor in the catalytic mechanism. The active-site Schiff-base intermediate with substrate is the Lys162. Residue Val204 participates in pyruvate binding.

This sequence belongs to the DapA family. In terms of assembly, homotetramer; dimer of dimers.

It localises to the cytoplasm. It catalyses the reaction L-aspartate 4-semialdehyde + pyruvate = (2S,4S)-4-hydroxy-2,3,4,5-tetrahydrodipicolinate + H2O + H(+). The protein operates within amino-acid biosynthesis; L-lysine biosynthesis via DAP pathway; (S)-tetrahydrodipicolinate from L-aspartate: step 3/4. Functionally, catalyzes the condensation of (S)-aspartate-beta-semialdehyde [(S)-ASA] and pyruvate to 4-hydroxy-tetrahydrodipicolinate (HTPA). This is 4-hydroxy-tetrahydrodipicolinate synthase 1 from Halalkalibacterium halodurans (strain ATCC BAA-125 / DSM 18197 / FERM 7344 / JCM 9153 / C-125) (Bacillus halodurans).